Reading from the N-terminus, the 221-residue chain is Max dimerization protein 1 (221 aa).

A Nuclear localization signal motif is present at residues 21–49; that stretch reads RREREAEHGYASMLPYNNKDRDALKRRNK. 2 disordered regions span residues 30-68 and 173-204; these read YASM…EKNR and TGDL…YSST. The bHLH domain maps to 56-108; sequence SSRSTHNEMEKNRRAHLRLCLEKLKGLVPLGPESSRHTTLSLLTKAKLHIKKL. The segment covering 175–184 has biased composition (low complexity); sequence DLDWSSSSVS. Residues 191 to 204 show a composition bias toward polar residues; sequence SMQSLGSDEGYSST.

In terms of assembly, heterodimer with MAX; the interaction is required for DNA-binding. DNA binding requires dimerization with another bHLH protein; does not form homodimers, and does not bind to DNA in the absence of MAX in vitro. Interacts with RNF17. Ubiquitinated by BIRC2/c-IAP1, leading to its subsequent degradation by the proteasome.

The protein resides in the nucleus. Its function is as follows. Component of a transcriptional repressor complex together with MAX. In complex with MAX binds to the core DNA sequence 5'-CAC[GA]TG-3'. Antagonizes MYC transcriptional activity by competing with MYC for MAX binding. Binds to the TERT promoter and represses telomerase expression, possibly by interfering with MYC binding. The chain is Max dimerization protein 1 (MXD1) from Homo sapiens (Human).